A 255-amino-acid polypeptide reads, in one-letter code: MEFRGHDEPVDEMGVAYGRTPPSSSSSPAASASAGNGAGAAEVRYHECLRNHAAAMGGHVVDGCREFMPMPGDAADALKCAACGCHRSFHRKDDGQQQQQLRLLIPSPPTPRVPLLMPPPQPQPHPHPQHPYLHPPFPYHHTPSGSGGTTTESSSEERGPPSSSAAAAQGRRKRFRTKFTPEQKEQMLAFAERVGWRMQKQDEALVEQFCAQVGVRRQVFKVWMHNNKSSIGSSSGGGSRRQPQEQQSQQQQQQQ.

A disordered region spans residues 1 to 35 (MEFRGHDEPVDEMGVAYGRTPPSSSSSPAASASAG). Residues 21–35 (PPSSSSSPAASASAG) show a composition bias toward low complexity. Residues 45–93 (YHECLRNHAAAMGGHVVDGCREFMPMPGDAADALKCAACGCHRSFHRKD) form a ZF-HD dimerization-type; degenerate zinc finger. The span at 106 to 126 (PSPPTPRVPLLMPPPQPQPHP) shows a compositional bias: pro residues. 2 disordered regions span residues 106–181 (PSPP…KFTP) and 226–255 (NNKS…QQQQ). Residues 139-153 (YHHTPSGSGGTTTES) show a composition bias toward low complexity. The segment at residues 172-235 (RKRFRTKFTP…NNKSSIGSSS (64 aa)) is a DNA-binding region (homeobox). Over residues 240-255 (RRQPQEQQSQQQQQQQ) the composition is skewed to low complexity.

In terms of assembly, homo- and heterodimer with other ZFHD proteins.

Its subcellular location is the nucleus. Its function is as follows. Putative transcription factor. The polypeptide is Zinc-finger homeodomain protein 6 (ZHD6) (Oryza sativa subsp. japonica (Rice)).